Here is a 306-residue protein sequence, read N- to C-terminus: MRNERRKKKKTLLLTILTIIGLLVLGTGGYAYYLWHKAASTVASIHESIDKSKKRDKEVSINKKDPFSVLIMGVDERDGDKGRADTLIYMTVNPKTNTTDMVSIPRDTYTKIIGKGTMDKINHSYAFGGTQMTVDTVENFLDVPVDYFVKVNMESFRDVVDTLGGITVNSTFAFSYDGYSFGKGEITLNGKEALAYTRMRKEDPRGDFGRQDRQRQVIQGIINKGANISSITKFGDMFKVVENNVKTNLTFDNMWDIQSDYKGARKHIKQHELKGTGTKINGIYYYQADESALSDITKELKESLEK.

The Cytoplasmic segment spans residues Met1–Thr11. A helical; Signal-anchor for type II membrane protein transmembrane segment spans residues Leu12–Tyr32. The Extracellular segment spans residues Tyr33–Lys306.

Belongs to the LytR/CpsA/Psr (LCP) family. Interacts with MreB. Interacts with FloT.

It is found in the cell membrane. The protein resides in the membrane raft. It functions in the pathway cell wall biogenesis. Its function is as follows. May catalyze the final step in cell wall teichoic acid biosynthesis, the transfer of the anionic cell wall polymers (APs) from their lipid-linked precursor to the cell wall peptidoglycan (PG). The sequence is that of Polyisoprenyl-teichoic acid--peptidoglycan teichoic acid transferase TagU from Bacillus subtilis (strain 168).